The primary structure comprises 91 residues: Small ribosomal subunit protein uS15 (91 aa).

Belongs to the universal ribosomal protein uS15 family. As to quaternary structure, part of the 30S ribosomal subunit. Forms a bridge to the 50S subunit in the 70S ribosome, contacting the 23S rRNA.

In terms of biological role, one of the primary rRNA binding proteins, it binds directly to 16S rRNA where it helps nucleate assembly of the platform of the 30S subunit by binding and bridging several RNA helices of the 16S rRNA. Forms an intersubunit bridge (bridge B4) with the 23S rRNA of the 50S subunit in the ribosome. This is Small ribosomal subunit protein uS15 from Nautilia profundicola (strain ATCC BAA-1463 / DSM 18972 / AmH).